The chain runs to 173 residues: Calmodulin-like protein 11 (173 aa).

Over residues 1 to 26 (MEEIQQQQQQQQQQQQQQQQQQQQQQ) the composition is skewed to low complexity. A disordered region spans residues 1–27 (MEEIQQQQQQQQQQQQQQQQQQQQQQE). 4 EF-hand domains span residues 31-66 (EQIM…LDQN), 67-102 (PTEQ…QLQE), 104-139 (DADE…LGEK), and 140-173 (LTDE…MING). The Ca(2+) site is built by Asp44, Asp46, Asp48, Cys50, Glu55, Asp80, Asp82, Asn84, Thr86, Glu91, Asp117, Asp119, Asn121, Tyr123, Glu128, Asp153, Asp155, Asp157, Gln159, and Glu164.

The protein belongs to the calmodulin family.

Functionally, potential calcium sensor. The chain is Calmodulin-like protein 11 (CML11) from Arabidopsis thaliana (Mouse-ear cress).